Consider the following 227-residue polypeptide: Ribose-5-phosphate isomerase A (227 aa).

Substrate-binding positions include 28-31, 81-84, and 94-97; these read TGST, DGAD, and KGGG. Glu-103 functions as the Proton acceptor in the catalytic mechanism. Lys-121 contacts substrate.

This sequence belongs to the ribose 5-phosphate isomerase family. Homodimer.

The catalysed reaction is aldehydo-D-ribose 5-phosphate = D-ribulose 5-phosphate. It functions in the pathway carbohydrate degradation; pentose phosphate pathway; D-ribose 5-phosphate from D-ribulose 5-phosphate (non-oxidative stage): step 1/1. Its function is as follows. Catalyzes the reversible conversion of ribose-5-phosphate to ribulose 5-phosphate. In Caulobacter vibrioides (strain ATCC 19089 / CIP 103742 / CB 15) (Caulobacter crescentus), this protein is Ribose-5-phosphate isomerase A.